A 360-amino-acid chain; its full sequence is Alpha-methylacyl-CoA racemase (360 aa).

Residues arginine 38, 59-62, 83-85, arginine 91, and 125-130 contribute to the substrate site; these read ADLK, GYR, and GHDINY. The Proton acceptor role is filled by histidine 126. Aspartate 156 acts as the Proton donor in catalysis.

The protein belongs to the CoA-transferase III family. As to quaternary structure, homodimer.

The catalysed reaction is a (2S)-2-methylacyl-CoA = a (2R)-2-methylacyl-CoA. It carries out the reaction (2S)-2-methyltetradecanoyl-CoA = (2R)-2-methyltetradecanoyl-CoA. It catalyses the reaction (2R)-pristanoyl-CoA = (2S)-pristanoyl-CoA. The enzyme catalyses (25S)-3-oxocholest-4-en-26-oyl-CoA = (25R)-3-oxocholest-4-en-26-oyl-CoA. The catalysed reaction is (2S)-ibuprofenoyl-CoA = (2R)-ibuprofenoyl-CoA. With respect to regulation, inactivated by N,N-dialkylcarbamoyl-CoA substrate-product analogs. Functionally, catalyzes the epimerization of (2R)- and (2S)-methylacyl-coenzyme A (CoA) thioesters. Accepts as substrates a wide range of alpha-methylacyl-CoAs, including (2R)-2-methylmyristoyl-CoA and (2S)-2-methylmyristoyl-CoA, (2R)-pristanoyl-CoA and (2S)-pristanoyl-CoA, and the cholesterol esters (25R)-3-oxo-cholest-4-en-26-oyl-CoA and (25S)-3-oxo-cholest-4-en-26-oyl-CoA. Can also catalyze the interconversion of the non-physiologic substrates (2R)-ibuprofenoyl-CoA and (2S)-ibuprofenoyl-CoA, which are potential competitive inhibitors of the enzyme. The chain is Alpha-methylacyl-CoA racemase from Mycobacterium tuberculosis (strain ATCC 25618 / H37Rv).